We begin with the raw amino-acid sequence, 381 residues long: Putative F-box protein At4g17200 (381 aa).

The region spanning 1–47 (MTTMSDLSPDLVGEILTRVPMTSLISVRCTCKMWNALSKEGIFFKAA) is the F-box domain.

The sequence is that of Putative F-box protein At4g17200 from Arabidopsis thaliana (Mouse-ear cress).